The chain runs to 233 residues: Demethylmenaquinone methyltransferase (233 aa).

Residues Thr-58, Asp-79, and 106–107 (NA) contribute to the S-adenosyl-L-methionine site.

The protein belongs to the class I-like SAM-binding methyltransferase superfamily. MenG/UbiE family.

The enzyme catalyses a 2-demethylmenaquinol + S-adenosyl-L-methionine = a menaquinol + S-adenosyl-L-homocysteine + H(+). It functions in the pathway quinol/quinone metabolism; menaquinone biosynthesis; menaquinol from 1,4-dihydroxy-2-naphthoate: step 2/2. Its function is as follows. Methyltransferase required for the conversion of demethylmenaquinol (DMKH2) to menaquinol (MKH2). The protein is Demethylmenaquinone methyltransferase of Bacillus velezensis (strain DSM 23117 / BGSC 10A6 / LMG 26770 / FZB42) (Bacillus amyloliquefaciens subsp. plantarum).